A 434-amino-acid chain; its full sequence is Asparagine--tRNA ligase (434 aa).

This sequence belongs to the class-II aminoacyl-tRNA synthetase family.

The protein resides in the cytoplasm. The catalysed reaction is tRNA(Asn) + L-asparagine + ATP = L-asparaginyl-tRNA(Asn) + AMP + diphosphate + H(+). This is Asparagine--tRNA ligase from Pyrococcus abyssi (strain GE5 / Orsay).